We begin with the raw amino-acid sequence, 923 residues long: Helicase POLQ-like (923 aa).

The interval 1-84 is disordered; sequence MNRTPIRRCK…STVTPIQQKI (84 aa). A compositionally biased stretch (low complexity) spans 43–55; it reads STSPQSPSSSTEN. A Helicase ATP-binding domain is found at 178–349; that stretch reads DKRLLDGENC…ALRAFVYSTN (172 aa). 191 to 198 contacts ATP; that stretch reads LPTGAGKT. The short motif at 295–298 is the DEAH box element; sequence DELH. A Helicase C-terminal domain is found at 392-596; it reads GICQLLAKLI…CVVLKLAENI (205 aa).

Belongs to the helicase family. SKI2 subfamily.

It is found in the nucleus. Its subcellular location is the chromosome. It catalyses the reaction Couples ATP hydrolysis with the unwinding of duplex DNA by translocating in the 3'-5' direction.. The catalysed reaction is ATP + H2O = ADP + phosphate + H(+). Single-stranded 3'-5' DNA helicase that plays a key role in homology-driven double-strand break (DSB) repair. Involved in different DSB repair mechanisms that are guided by annealing of extensive stretches of complementary bases at break ends, such as microhomology-mediated end-joining (MMEJ), single-strand annealing (SSA) or synthesis-dependent strand annealing (SDSA). The protein is Helicase POLQ-like of Caenorhabditis elegans.